Reading from the N-terminus, the 186-residue chain is Ribosome-recycling factor (186 aa).

Belongs to the RRF family.

Its subcellular location is the cytoplasm. In terms of biological role, responsible for the release of ribosomes from messenger RNA at the termination of protein biosynthesis. May increase the efficiency of translation by recycling ribosomes from one round of translation to another. This is Ribosome-recycling factor from Brucella melitensis biotype 2 (strain ATCC 23457).